We begin with the raw amino-acid sequence, 245 residues long: Putative [LysW]-aminoadipate/[LysW]-glutamate kinase (245 aa).

Arginine 60 and asparagine 162 together coordinate substrate.

It belongs to the acetylglutamate kinase family. LysZ subfamily.

Its subcellular location is the cytoplasm. It catalyses the reaction [amino-group carrier protein]-C-terminal-N-(1,4-dicarboxybutan-1-yl)-L-glutamine + ATP = [amino-group carrier protein]-C-terminal-N-(1-carboxy-5-phosphooxy-5-oxopentan-1-yl)-L-glutamine + ADP. The enzyme catalyses [amino-group carrier protein]-C-terminal-gamma-(L-glutamyl)-L-glutamate + ATP = [amino-group carrier protein]-C-terminal-gamma-(5-phospho-L-glutamyl)-L-glutamate + ADP. It participates in amino-acid biosynthesis; L-lysine biosynthesis via AAA pathway; L-lysine from L-alpha-aminoadipate (Thermus route): step 2/5. Its pathway is amino-acid biosynthesis; L-arginine biosynthesis. Involved in both the arginine and lysine biosynthetic pathways. Phosphorylates the LysW-bound precursors glutamate (for arginine biosynthesis), respectively alpha-aminoadipate (for lysine biosynthesis). In Pyrococcus abyssi (strain GE5 / Orsay), this protein is Putative [LysW]-aminoadipate/[LysW]-glutamate kinase.